Here is a 162-residue protein sequence, read N- to C-terminus: RNA replication protein (162 aa).

Belongs to the potexvirus/carlavirus RNA replication protein family.

It carries out the reaction RNA(n) + a ribonucleoside 5'-triphosphate = RNA(n+1) + diphosphate. The catalysed reaction is ATP + H2O = ADP + phosphate + H(+). RNA replication. The central part of this protein possibly functions as an ATP-binding helicase. In Lilium formosanum, this protein is RNA replication protein.